Consider the following 811-residue polypeptide: Lysine-specific histone demethylase 1 homolog 3 (811 aa).

Pro residues predominate over residues 1-10; that stretch reads MSDQPPPYTP. Positions 1 to 79 are disordered; it reads MSDQPPPYTP…PSAQPPPRAS (79 aa). Over residues 44-55 the composition is skewed to basic residues; the sequence is NKRKRTGFRRKL. A compositionally biased stretch (low complexity) spans 56-71; the sequence is PSGSPAAPVAVAASPS. The region spanning 88 to 189 is the SWIRM domain; it reads NREPTAEAVT…FGVAPAIKER (102 aa). Positions 227, 229, 235, and 609 each coordinate FAD. A disordered region spans residues 790 to 811; it reads RNSSRTKTRPSKLKIGIPKSKS.

It belongs to the flavin monoamine oxidase family. Requires FAD as cofactor.

In terms of biological role, probable histone demethylase. In Oryza sativa subsp. japonica (Rice), this protein is Lysine-specific histone demethylase 1 homolog 3.